Consider the following 379-residue polypeptide: Probable leucine aminopeptidase TRV_05286 (379 aa).

The first 18 residues, 1-18 (MKIATLAVVSAFAATAIA), serve as a signal peptide directing secretion. 2 residues coordinate Zn(2+): His-182 and Asp-201. N-linked (GlcNAc...) asparagine glycosylation is found at Asn-202 and Asn-226. Residues Glu-240 and Asp-267 each contribute to the Zn(2+) site. The cysteines at positions 312 and 316 are disulfide-linked. A Zn(2+)-binding site is contributed by His-345.

Belongs to the peptidase M28 family. M28E subfamily. In terms of assembly, monomer. Requires Zn(2+) as cofactor.

It localises to the secreted. Probable extracellular aminopeptidase which contributes to pathogenicity. In Trichophyton verrucosum (strain HKI 0517), this protein is Probable leucine aminopeptidase TRV_05286.